The following is a 172-amino-acid chain: Ribosome maturation factor RimM (172 aa).

The PRC barrel domain occupies 100-172 (PGEYYRVDLV…RIVVDWDPGF (73 aa)).

It belongs to the RimM family. In terms of assembly, binds ribosomal protein uS19.

It is found in the cytoplasm. Functionally, an accessory protein needed during the final step in the assembly of 30S ribosomal subunit, possibly for assembly of the head region. Essential for efficient processing of 16S rRNA. May be needed both before and after RbfA during the maturation of 16S rRNA. It has affinity for free ribosomal 30S subunits but not for 70S ribosomes. The polypeptide is Ribosome maturation factor RimM (Methylococcus capsulatus (strain ATCC 33009 / NCIMB 11132 / Bath)).